Consider the following 104-residue polypeptide: L-rhamnose mutarotase (104 aa).

Y18 provides a ligand contact to substrate. H22 (proton donor) is an active-site residue. Residues Y41 and 76-77 (WW) each bind substrate.

The protein belongs to the rhamnose mutarotase family. Homodimer.

It localises to the cytoplasm. It catalyses the reaction alpha-L-rhamnose = beta-L-rhamnose. The protein operates within carbohydrate metabolism; L-rhamnose metabolism. L-rhamnose mutarotase involved in ulvan degradation. Ulvan is the main polysaccharide component of the Ulvales (green seaweed) cell wall. It is composed of disaccharide building blocks comprising 3-sulfated rhamnose (Rha3S) linked to D-glucuronic acid (GlcA), L-iduronic acid (IduA), or D-xylose (Xyl). L-rhamnose mutarotase catalyzes the anomeric conversion of alpha- to beta-L-rhamnose. This Formosa agariphila (strain DSM 15362 / KCTC 12365 / LMG 23005 / KMM 3901 / M-2Alg 35-1) protein is L-rhamnose mutarotase (rhaM).